Reading from the N-terminus, the 559-residue chain is Asparagine--tRNA ligase, cytoplasmic (559 aa).

At Ser72 the chain carries Phosphoserine. 2 positions are modified to N6-acetyllysine: Lys255 and Lys501.

The protein belongs to the class-II aminoacyl-tRNA synthetase family.

It is found in the cytoplasm. The catalysed reaction is tRNA(Asn) + L-asparagine + ATP = L-asparaginyl-tRNA(Asn) + AMP + diphosphate + H(+). The protein is Asparagine--tRNA ligase, cytoplasmic (NARS) of Bos taurus (Bovine).